A 199-amino-acid polypeptide reads, in one-letter code: TATA-box-binding protein (199 aa).

A run of 2 repeats spans residues 10-86 (IENI…VKLL) and 101-177 (IQNI…YNQL).

It belongs to the TBP family.

Its function is as follows. General factor that plays a role in the activation of archaeal genes transcribed by RNA polymerase. Binds specifically to the TATA box promoter element which lies close to the position of transcription initiation. This chain is TATA-box-binding protein, found in Pyrobaculum aerophilum (strain ATCC 51768 / DSM 7523 / JCM 9630 / CIP 104966 / NBRC 100827 / IM2).